Reading from the N-terminus, the 749-residue chain is MSQWNQVQQLEIKFLEQVDQFYDDNFPMEIRHLLAQWIETQDWEVASNNETMATILLQNLLIQLDEQLGRVSKEKNLLLIHNLKRIRKVLQGKFHGNPMHVAVVISNCLREERRILAAANMPIQGPLEKSLQSSSVSERQRNVEHKVSAIKNSVQMTEQDTKYLEDLQDEFDYRYKTIQTMDQGDKNSILVNQEVLTLLQEMLNSLDFKRKEALSKMTQIVNETDLLMNSMLLEELQDWKKRQQIACIGGPLHNGLDQLQNCFTLLAESLFQLRQQLEKLQEQSTKMTYEGDPIPAQRAHLLERATFLIYNLFKNSFVVERQPCMPTHPQRPMVLKTLIQFTVKLRLLIKLPELNYQVKVKASIDKNVSTLSNRRFVLCGTHVKAMSSEESSNGSLSVEFRHLQPKEMKCSTGSKGNEGCHMVTEELHSITFETQICLYGLTINLETSSLPVVMISNVSQLPNAWASIIWYNVSTNDSQNLVFFNNPPSVTLGQLLEVMSWQFSSYVGRGLNSEQLNMLAEKLTVQSNYNDGHLTWAKFCKEHLPGKTFTFWTWLEAILDLIKKHILPLWIDGYIMGFVSKEKERLLLKDKMPGTFLLRFSESHLGGITFTWVDQSENGEVRFHSVEPYNKGRLSALAFADILRDYKVIMAENIPENPLKYLYPDIPKDKAFGKHYSSQPCEVSRPTERGDKGYVPSVFIPISTIRSDSTEPQSPSDLLPMSPSAYAVLRENLSPTTIETAMNSPYSAE.

An SH2 domain is found at 570-665 (WIDGYIMGFV…ENPLKYLYPD (96 aa)). N6-acetyllysine is present on Lys668. Tyr694 carries the phosphotyrosine; by JAK modification. Ser722 carries the post-translational modification Phosphoserine.

Belongs to the transcription factor STAT family. In terms of assembly, forms a homodimer or a heterodimer with a related family member. Interacts with ARL2BP. Interacts with STAT1. Interacts with JUN; this complex efficiently interacts with the AP-1-related sequence of the IFN-gamma promoter. Acetylation at Lys-668 is required for JAK2-mediated phosphorylation and activation of STAT4. Post-translationally, tyrosine phosphorylated upon IL12 and IFN-alpha activation, but not by IFN-gamma in T-lymphocytes and NK cells. Serine phosphorylation is required for maximal transcriptional activity but not for DNA binding. Phosphorylation by MAP2K6 at Ser-722 is required for full transcriptional activity induced by IL12. However this serine phosphorylation is not required for cell proliferation although critical for IFN-gamma production. In terms of tissue distribution, expression is restricted to testis, thymus, and spleen.

The protein localises to the cytoplasm. It localises to the nucleus. Transcriptional regulator mainly expressed in hematopoietic cells that plays a critical role in cellular growth, differentiation and immune response. Plays a key role in the differentiation of T-helper 1 cells and the production of interferon-gamma. Also participates in multiple neutrophil functions including chemotaxis and production of the neutrophil extracellular traps. After IL12 binding to its receptor IL12RB2, STAT4 interacts with the intracellular domain of IL12RB2 and becomes tyrosine phosphorylated. Phosphorylated STAT4 then homodimerizes and migrates to the nucleus where it can recognize STAT target sequences present in IL12 responsive genes. Although IL12 appears to be the predominant activating signal, STAT4 can also be phosphorylated and activated in response to IFN-gamma stimulation via JAK1 and TYK2 and in response to different interleukins including IL23, IL2 and IL35. Transcription activation of IFN-gamma gene is mediated by interaction with JUN that forms a complex that efficiently interacts with the AP-1-related sequence of the IFN-gamma promoter. In response to IFN-alpha/beta signaling, acts as a transcriptional repressor and suppresses IL5 and IL13 mRNA expression during response to T-cell receptor (TCR) activation. This chain is Signal transducer and activator of transcription 4 (Stat4), found in Mus musculus (Mouse).